We begin with the raw amino-acid sequence, 1417 residues long: Cytoadherence-linked asexual protein 3.1 (1417 aa).

The N-terminal stretch at Met1–Cys24 is a signal peptide. Disulfide bonds link Cys333–Cys361, Cys407–Cys413, Cys517–Cys545, and Cys521–Cys542. A helical membrane pass occupies residues Leu1204–Phe1224. Positions Thr1383 to His1417 are disordered. Residues Asp1394–Leu1411 show a composition bias toward acidic residues.

In terms of assembly, self-associates. Component of the RhopH complex. RhopH complex is at least composed of CLAG3.1/CLAG3.2, RhopH2 and RhopH3 with a 1:1:1 subunit stoichiometry. CLAG3.1/CLAG3.2 mediates subunit association through independent contacts with RhopH2 and RhopH3, which do not directly interact with one another. Interacts with RhopH2. Interacts with RhopH3.

It is found in the host cell membrane. It localises to the host cytoplasm. The protein resides in the cytoplasmic vesicle. Its subcellular location is the secretory vesicle. The protein localises to the rhoptry. Functionally, participates in the formation of new permeability pathways in Plasmodium-infected erythrocytes enabling the uptake of nutrients from the blood plasma. This is Cytoadherence-linked asexual protein 3.1 from Plasmodium falciparum.